Here is a 226-residue protein sequence, read N- to C-terminus: Histone H2B.v1 (226 aa).

The disordered stretch occupies residues 100–130 (FNSAKQYPPQPPPAKTATPSSPSSIPAPPIS). The span at 114–123 (KTATPSSPSS) shows a compositional bias: low complexity.

Belongs to the histone H2B family.

In Dictyostelium discoideum (Social amoeba), this protein is Histone H2B.v1 (H2Bv1).